The sequence spans 196 residues: uncharacterized protein (196 aa).

S-adenosyl-L-methionine is bound by residues 44–46 (TTA), Gly80, Val100, and 107–109 (PSL).

This sequence belongs to the class IV-like SAM-binding methyltransferase superfamily. RNA methyltransferase TrmH family.

This is an uncharacterized protein from Serratia marcescens.